A 266-amino-acid polypeptide reads, in one-letter code: Maltodextrose utilization protein MalA (266 aa).

Functionally, has a role in maltotetraose utilization. The polypeptide is Maltodextrose utilization protein MalA (malA) (Streptococcus pneumoniae (strain ATCC BAA-255 / R6)).